The sequence spans 545 residues: Ribulokinase (545 aa).

Belongs to the ribulokinase family.

The catalysed reaction is D-ribulose + ATP = D-ribulose 5-phosphate + ADP + H(+). It carries out the reaction L-ribulose + ATP = L-ribulose 5-phosphate + ADP + H(+). The protein operates within carbohydrate degradation; L-arabinose degradation via L-ribulose; D-xylulose 5-phosphate from L-arabinose (bacterial route): step 2/3. The chain is Ribulokinase from Staphylococcus aureus (strain USA300).